A 271-amino-acid chain; its full sequence is Protein PXR1 (271 aa).

The G-patch domain occupies 25 to 72; that stretch reads TSRFGHQFLEKFGWKPGMGLGLSPMNSNTSHIKVSIKDDNVGLGAKLK. Residues 147–239 form a disordered region; it reads SNAKKRKREG…SASNIPDAVN (93 aa). The segment covering 157 to 168 has biased composition (acidic residues); the sequence is DDSEDEDDDDKE. Positions 175 to 203 are enriched in basic residues; sequence KKHKKHKKHKKDKKKDKKDKKEHKKHKKE. Over residues 204-221 the composition is skewed to basic and acidic residues; it reads EKRLKKEKRAEKTKETKK. Ser230 is subject to Phosphoserine.

It belongs to the PINX1 family. Interacts with EST2.

Its subcellular location is the nucleus. The protein resides in the nucleolus. Involved in rRNA-processing at A0, A1 and A2 sites through its action in U18 and U24 snoRNA 3'-end final trimming. Negative regulator of telomerase through competition for binding to EST2 with TLC1. The sequence is that of Protein PXR1 (PXR1) from Saccharomyces cerevisiae (strain ATCC 204508 / S288c) (Baker's yeast).